The sequence spans 178 residues: ATP synthase subunit delta (178 aa).

This sequence belongs to the ATPase delta chain family. In terms of assembly, F-type ATPases have 2 components, F(1) - the catalytic core - and F(0) - the membrane proton channel. F(1) has five subunits: alpha(3), beta(3), gamma(1), delta(1), epsilon(1). F(0) has three main subunits: a(1), b(2) and c(10-14). The alpha and beta chains form an alternating ring which encloses part of the gamma chain. F(1) is attached to F(0) by a central stalk formed by the gamma and epsilon chains, while a peripheral stalk is formed by the delta and b chains.

Its subcellular location is the cell membrane. Functionally, f(1)F(0) ATP synthase produces ATP from ADP in the presence of a proton or sodium gradient. F-type ATPases consist of two structural domains, F(1) containing the extramembraneous catalytic core and F(0) containing the membrane proton channel, linked together by a central stalk and a peripheral stalk. During catalysis, ATP synthesis in the catalytic domain of F(1) is coupled via a rotary mechanism of the central stalk subunits to proton translocation. Its function is as follows. This protein is part of the stalk that links CF(0) to CF(1). It either transmits conformational changes from CF(0) to CF(1) or is implicated in proton conduction. In Geobacillus sp. (strain WCH70), this protein is ATP synthase subunit delta.